Here is a 115-residue protein sequence, read N- to C-terminus: HTH-type transcriptional regulator SarR (115 aa).

Positions 51-74 (SKEIAKCSEFKPYYLTKALQKLKD) form a DNA-binding region, H-T-H motif.

Belongs to the SarA family. Homodimer.

The protein resides in the cytoplasm. Negative regulator of sarA transcription at late exponential and stationary growth phases. It contributes to the modulation of target genes downstream of the sarA regulatory cascade. Also, positively regulates expression of primary transcripts RNAII and RNAIII generated by agr (virulence accessory gene regulator) locus. This chain is HTH-type transcriptional regulator SarR (sarR), found in Staphylococcus aureus (strain NCTC 8325 / PS 47).